The sequence spans 275 residues: 18S rRNA (guanine(1575)-N(7))-methyltransferase (275 aa).

The segment at 256-275 (RGRKVAKDSKFTGRKRRHRF) is disordered. Positions 257 to 264 (GRKVAKDS) match the Nuclear localization signal motif.

The protein belongs to the class I-like SAM-binding methyltransferase superfamily. BUD23/WBSCR22 family. Interacts with TRM112. Interacts with ECM16.

The protein localises to the cytoplasm. It localises to the nucleus. The enzyme catalyses guanosine(1575) in yeast 18S rRNA + S-adenosyl-L-methionine = N(7)-methylguanosine(1575) in yeast 18S rRNA + S-adenosyl-L-homocysteine. Functionally, S-adenosyl-L-methionine-dependent methyltransferase that specifically methylates the N(7) position of guanine 1575 (m7G1575) in 18S rRNA. Requires the methyltransferase adapter protein TRM112 for full rRNA methyltransferase activity. Important for biogenesis end export of the 40S ribosomal subunit independent on its methyltransferase activity. Required for efficient cleavage of the primary 35S precursor rRNA at site A2. Involved in positioning the proximal bud pole signal. The sequence is that of 18S rRNA (guanine(1575)-N(7))-methyltransferase (BUD23) from Saccharomyces cerevisiae (strain ATCC 204508 / S288c) (Baker's yeast).